We begin with the raw amino-acid sequence, 665 residues long: Filensin (665 aa).

The head stretch occupies residues 1–40 (MYRRSYVFQTRKEQYEHADEASRAAEPERPADEGWAGATS). The residue at position 5 (serine 5) is a Phosphoserine. In terms of domain architecture, IF rod spans 40-320 (SLAALQGLGE…RIIEIEGNRL (281 aa)). The coil 1A stretch occupies residues 41–75 (LAALQGLGERVAAHVQRARALEQRHAGLRRQLDAF). Alanine 42 bears the N-acetylalanine mark. The linker 1 stretch occupies residues 76–84 (QRLGELAGP). The coil 1B stretch occupies residues 85–184 (EDALARQVES…RHKKNLLEVQ (100 aa)). Positions 185-201 (TYISILQQIIHTTPPAS) are linker 12. Residues 202 to 320 (IVTSGMREEK…RIIEIEGNRL (119 aa)) form a coil 2 region. Positions 321–665 (TSAFIETPIP…DKKKSGEKSS (345 aa)) are tail. Residues serine 341 and serine 420 each carry the phosphoserine modification. Disordered stretches follow at residues 410 to 439 (SKFESESKEVSPLTQEGAPEDVPDGGQISK) and 506 to 614 (YDGQ…KGPP). Glycine 434 is lipidated: N-myristoyl glycine. Residue serine 513 is modified to Phosphoserine. Residues 556–571 (PEEKREGEERDEESRR) show a composition bias toward basic and acidic residues. At serine 665 the chain carries Phosphoserine.

This sequence belongs to the intermediate filament family. Part of a complex required for lens intermediate filament formation composed of BFSP1, BFSP2 and CRYAA. Identified in a complex that contains VIM, EZR, AHNAK, BFSP1, BFSP2, ANK2, PLEC, PRX and spectrin. Found in a complex composed of PPL (via C-terminal linker domain), BFSP1 and BFSP2 in the retinal lens. Within the complex interacts with BFSP2. Interacts (via C-terminus) with MIP (via C-terminus) in aged lens fiber cells. Proteolytically cleaved during lens cell fiber differentiation with increased fragmentation as fiber cell age increases. In terms of processing, myristoylated at Gly-434 following proteolytic cleavage at Asp-433. Post-translationally, acetylated at Ala-42 following proteolytic cleavage at Leu-41. As to expression, expressed in the cortex and nucleus of the retina lens (at protein level).

It localises to the cell membrane. It is found in the cytoplasm. The protein resides in the cytoskeleton. The protein localises to the cell cortex. In terms of biological role, required for the correct formation of lens intermediate filaments as part of a complex composed of BFSP1, BFSP2 and CRYAA. Involved in altering the calcium regulation of MIP water permeability. This Homo sapiens (Human) protein is Filensin (BFSP1).